The chain runs to 148 residues: Snaclec crotocetin (148 aa).

The N-terminal stretch at 1-23 (MGRLVFVSFGLLVVFLSLTGTGA) is a signal peptide. 3 disulfide bridges follow: cysteine 27–cysteine 38, cysteine 55–cysteine 144, and cysteine 121–cysteine 136. A C-type lectin domain is found at 34-145 (YEGHCYKVFK…CSKTHKVVCK (112 aa)).

The protein belongs to the snaclec family. In terms of assembly, heterodimer; disulfide-linked. Expressed by the venom gland.

The protein localises to the secreted. Its function is as follows. Interferes with one step of hemostasis (modulation of platelet aggregation, or coagulation cascade, for example). The protein is Snaclec crotocetin of Crotalus durissus terrificus (South American rattlesnake).